The sequence spans 468 residues: Probable Xaa-Pro aminopeptidase PEPP (468 aa).

Aspartate 264, aspartate 275, glutamate 398, and glutamate 438 together coordinate Mn(2+).

This sequence belongs to the peptidase M24B family. Mn(2+) is required as a cofactor.

It catalyses the reaction Release of any N-terminal amino acid, including proline, that is linked to proline, even from a dipeptide or tripeptide.. Functionally, catalyzes the removal of a penultimate prolyl residue from the N-termini of peptides. In Paracoccidioides brasiliensis (strain Pb03), this protein is Probable Xaa-Pro aminopeptidase PEPP (PEPP).